Consider the following 240-residue polypeptide: Phosducin-like protein 3 (240 aa).

Met1 carries the post-translational modification N-acetylmethionine. A Phosducin domain is found at 27-181 (KELEEEEAEK…EGDIKAQFIG (155 aa)). Residues Ser44, Ser65, Ser235, and Ser237 each carry the phosphoserine modification. Residues 92-240 (FGEVLEISGK…MRRDSDSEDD (149 aa)) are thioredoxin fold.

Belongs to the phosducin family. Interacts (via thioredoxin fold region) with KDR/VEGFR2 (via juxtamembrane domain). Forms ternary complexes with the chaperonin CCT complex and actin substrate, leading to inhibition of actin folding. Interacts with XIAP (via BIR 3 and RING domain). Interacts with HSP90AA1 and HSP90AB1. N-terminal methionine acetylation destabilizes the protein. Expressed in blood vessels (at protein level).

It is found in the cytoplasm. The protein localises to the perinuclear region. Its subcellular location is the endoplasmic reticulum. In terms of biological role, acts as a chaperone for the angiogenic VEGF receptor KDR/VEGFR2, increasing its abundance by inhibiting its ubiquitination and degradation. Inhibits the folding activity of the chaperonin-containing T-complex (CCT) which leads to inhibition of cytoskeletal actin folding. Acts as a chaperone during heat shock alongside HSP90 and HSP40/70 chaperone complexes. Modulates the activation of caspases during apoptosis. The protein is Phosducin-like protein 3 (Pdcl3) of Mus musculus (Mouse).